A 491-amino-acid polypeptide reads, in one-letter code: Ketol-acid reductoisomerase (NADP(+)) (491 aa).

One can recognise a KARI N-terminal Rossmann domain in the interval 15–208 (AQLGKCRFMG…GGHRAGVLES (194 aa)). NADP(+) is bound by residues 45–48 (CGAQ), Arg-68, Arg-76, Ser-78, and 108–110 (DKQ). His-132 is a catalytic residue. Gly-158 contacts NADP(+). KARI C-terminal knotted domains follow at residues 209–344 (SFVA…TAPQ) and 345–484 (YEGK…MTDM). 4 residues coordinate Mg(2+): Asp-217, Glu-221, Glu-389, and Glu-393. Ser-414 contributes to the substrate binding site.

Belongs to the ketol-acid reductoisomerase family. It depends on Mg(2+) as a cofactor.

The catalysed reaction is (2R)-2,3-dihydroxy-3-methylbutanoate + NADP(+) = (2S)-2-acetolactate + NADPH + H(+). It catalyses the reaction (2R,3R)-2,3-dihydroxy-3-methylpentanoate + NADP(+) = (S)-2-ethyl-2-hydroxy-3-oxobutanoate + NADPH + H(+). Its pathway is amino-acid biosynthesis; L-isoleucine biosynthesis; L-isoleucine from 2-oxobutanoate: step 2/4. It functions in the pathway amino-acid biosynthesis; L-valine biosynthesis; L-valine from pyruvate: step 2/4. Its function is as follows. Involved in the biosynthesis of branched-chain amino acids (BCAA). Catalyzes an alkyl-migration followed by a ketol-acid reduction of (S)-2-acetolactate (S2AL) to yield (R)-2,3-dihydroxy-isovalerate. In the isomerase reaction, S2AL is rearranged via a Mg-dependent methyl migration to produce 3-hydroxy-3-methyl-2-ketobutyrate (HMKB). In the reductase reaction, this 2-ketoacid undergoes a metal-dependent reduction by NADPH to yield (R)-2,3-dihydroxy-isovalerate. The protein is Ketol-acid reductoisomerase (NADP(+)) of Escherichia coli (strain ATCC 8739 / DSM 1576 / NBRC 3972 / NCIMB 8545 / WDCM 00012 / Crooks).